Here is a 151-residue protein sequence, read N- to C-terminus: Multiprotein-bridging factor 1 (151 aa).

Residues Met1–Gln32 are disordered. An HTH cro/C1-type domain is found at Ile86–Lys140. Positions Gln97 to Ala116 form a DNA-binding region, H-T-H motif.

This sequence belongs to the MBF1 family.

Its function is as follows. Transcriptional coactivator that stimulates GCN4-dependent transcriptional activity by bridging the DNA-binding region of GCN4 and TBP (SPT15), thereby recruiting TBP to GCN4-bound promoters. Involved in induction of the ribosome quality control (RQC) pathway; a pathway that degrades nascent peptide chains during problematic translation. Required to prevent stalled ribosomes from frameshifting. The sequence is that of Multiprotein-bridging factor 1 (MBF1) from Candida albicans (strain SC5314 / ATCC MYA-2876) (Yeast).